Here is a 173-residue protein sequence, read N- to C-terminus: MDIEEFVERSIGCWRSQRSGHSLALSHFEEVRSTIDIVDLPKTDHEVKNLCDSSGVDIENAVSPFKMSWEGESDWDENEIIKGSCVLVPIPEDDNLKKGKLLRSQGYAETVSAVGEYYITEDDTFVLYTEYESAAAEEKIWFHTSNLRFRVSLIKTSDGNGVLTASFSSEIRS.

It belongs to the CpcS/CpeS biliprotein lyase family.

Its function is as follows. Covalently attaches a chromophore to Cys residue(s) of phycobiliproteins. The sequence is that of Chromophore lyase CpcS/CpeS 3 from Trichodesmium erythraeum (strain IMS101).